Here is a 508-residue protein sequence, read N- to C-terminus: Maturase K (508 aa).

This sequence belongs to the intron maturase 2 family. MatK subfamily.

The protein localises to the plastid. It is found in the chloroplast. In terms of biological role, usually encoded in the trnK tRNA gene intron. Probably assists in splicing its own and other chloroplast group II introns. In Stewartia pseudocamellia (Japanese stewartia), this protein is Maturase K.